Here is a 421-residue protein sequence, read N- to C-terminus: Enolase 1 (421 aa).

(2R)-2-phosphoglycerate is bound at residue Gln-164. The active-site Proton donor is the Glu-206. Asp-243, Glu-287, and Asp-314 together coordinate Mg(2+). Residues Lys-339, Arg-368, Ser-369, and Lys-390 each contribute to the (2R)-2-phosphoglycerate site. The active-site Proton acceptor is the Lys-339.

The protein belongs to the enolase family. In terms of assembly, component of the RNA degradosome, a multiprotein complex involved in RNA processing and mRNA degradation. Requires Mg(2+) as cofactor.

Its subcellular location is the cytoplasm. The protein localises to the secreted. The protein resides in the cell surface. The catalysed reaction is (2R)-2-phosphoglycerate = phosphoenolpyruvate + H2O. Its pathway is carbohydrate degradation; glycolysis; pyruvate from D-glyceraldehyde 3-phosphate: step 4/5. Catalyzes the reversible conversion of 2-phosphoglycerate (2-PG) into phosphoenolpyruvate (PEP). It is essential for the degradation of carbohydrates via glycolysis. In Methylococcus capsulatus (strain ATCC 33009 / NCIMB 11132 / Bath), this protein is Enolase 1.